The sequence spans 215 residues: Large ribosomal subunit protein uL3 (215 aa).

A compositionally biased stretch (low complexity) spans 131–144 (SSSRASHGNSRSHN). The interval 131 to 150 (SSSRASHGNSRSHNVPGSIG) is disordered. Gln-153 is subject to N5-methylglutamine.

It belongs to the universal ribosomal protein uL3 family. As to quaternary structure, part of the 50S ribosomal subunit. Forms a cluster with proteins L14 and L19. Post-translationally, methylated by PrmB.

Functionally, one of the primary rRNA binding proteins, it binds directly near the 3'-end of the 23S rRNA, where it nucleates assembly of the 50S subunit. The chain is Large ribosomal subunit protein uL3 from Nitrosomonas europaea (strain ATCC 19718 / CIP 103999 / KCTC 2705 / NBRC 14298).